We begin with the raw amino-acid sequence, 159 residues long: Large ribosomal subunit protein uL15 (159 aa).

Residues 1 to 18 (MKLNEIRDNEGSSKDRIR) show a composition bias toward basic and acidic residues. Residues 1–37 (MKLNEIRDNEGSSKDRIRVGRGIGSGKGKTGGRGVKG) form a disordered region. Residues 21-35 (RGIGSGKGKTGGRGV) are compositionally biased toward gly residues.

Belongs to the universal ribosomal protein uL15 family. In terms of assembly, part of the 50S ribosomal subunit.

Binds to the 23S rRNA. The protein is Large ribosomal subunit protein uL15 of Agrobacterium fabrum (strain C58 / ATCC 33970) (Agrobacterium tumefaciens (strain C58)).